The primary structure comprises 591 residues: Adenine deaminase (591 aa).

This sequence belongs to the metallo-dependent hydrolases superfamily. Adenine deaminase family. As to quaternary structure, homodimer. Requires Mn(2+) as cofactor.

The catalysed reaction is adenine + H2O + H(+) = hypoxanthine + NH4(+). The sequence is that of Adenine deaminase from Edwardsiella ictaluri (strain 93-146).